Here is an 872-residue protein sequence, read N- to C-terminus: Alanine--tRNA ligase (872 aa).

Zn(2+) is bound by residues histidine 563, histidine 567, cysteine 665, and histidine 669.

Belongs to the class-II aminoacyl-tRNA synthetase family. It depends on Zn(2+) as a cofactor.

It is found in the cytoplasm. It carries out the reaction tRNA(Ala) + L-alanine + ATP = L-alanyl-tRNA(Ala) + AMP + diphosphate. Functionally, catalyzes the attachment of alanine to tRNA(Ala) in a two-step reaction: alanine is first activated by ATP to form Ala-AMP and then transferred to the acceptor end of tRNA(Ala). Also edits incorrectly charged Ser-tRNA(Ala) and Gly-tRNA(Ala) via its editing domain. The protein is Alanine--tRNA ligase of Bacteroides fragilis (strain YCH46).